Here is a 41-residue protein sequence, read N- to C-terminus: Large ribosomal subunit protein bL36 (41 aa).

The protein belongs to the bacterial ribosomal protein bL36 family.

The polypeptide is Large ribosomal subunit protein bL36 (Vibrio vulnificus (strain YJ016)).